The sequence spans 856 residues: MISPDKQYESFTNLYNPSEIEKKWQLIWTENNLYKTDELTENSDKFYALSMFPYPSGNLHMGHVRNYVITDLIARFHRFKGKSVLHPMGWDAFGLPAENAAIERGISPSVWTKQNISHMRSQLKLLGLSVDWDREFATCDENYYIWTQYLFLELYKAGLVYQKESEVNWDPVDNTVLANEQVDSEGKSWRSGAVVEKKLLKQWFLRITNYADELLKDLEKLDNWPERVKIMQDNWIGKSIGTNINFNLNTNPEEKITVFTTRPDTLFGVTYLAISVNHSLIKYISDQETIQDIENLKQYLKNNKNNELEKIGIKTSLIAINPINSEPIPIWVASYVLDEYGTGAVMGVPAHDQRDFEFAKKNNIDIKQVIINDKSEKTNELDKAYVENGYLMNSDQYNFMENTIAKLKISEEGVDNGWAENKIQYRLRDWLISRQRYWGCPIPIVNCKKCGSVPLKQSELPVALPKDIDISANKINALGDNNHWINTTCPKCGIAAKKETDTMDTFMCSSWYFLRYPSSKCSNKPFEKIEINKWLPVDQYVGGVEHAILHLLYARFFTKALRDNELFEIDEPFKKLLTQGMVQAAAYKNNKTGKYVSPSDINDLSNPTDPIDNTKLEVLFEKMSKSKYNGIDPESVIKKYGADTARMFILFKAPPEKDLEWGDTDVEGQFRFLNRIWKLYINCAKDINSKSNSYPDREKSLIKSMNIAIKEISNDILNNQFNTAISELMKFYNSLANSINDVNNTLKIEALKTFCILLAPFAPHIAEEIWHLIGFKKSVHLEYWPSFNAEALKEDSYELVIQVNGKVRDKVKINNDMSEDQIKELTLKRPNILKWTQDKEIRKIIIVKGKIINIVV.

The short motif at 53-63 is the 'HIGH' region element; sequence PYPSGNLHMGH. A 'KMSKS' region motif is present at residues 622 to 626; sequence KMSKS. Lys-625 contributes to the ATP binding site.

The protein belongs to the class-I aminoacyl-tRNA synthetase family.

It is found in the cytoplasm. It catalyses the reaction tRNA(Leu) + L-leucine + ATP = L-leucyl-tRNA(Leu) + AMP + diphosphate. In Prochlorococcus marinus (strain MIT 9215), this protein is Leucine--tRNA ligase.